Here is a 56-residue protein sequence, read N- to C-terminus: Large ribosomal subunit protein bL32B (56 aa).

Over residues 1-19 (MAVPKRRMSRSNTRHRRAQ) the composition is skewed to basic residues. Residues 1–22 (MAVPKRRMSRSNTRHRRAQWKA) are disordered.

Belongs to the bacterial ribosomal protein bL32 family.

The protein is Large ribosomal subunit protein bL32B (rpmF2) of Streptomyces coelicolor (strain ATCC BAA-471 / A3(2) / M145).